The chain runs to 504 residues: Sodium-coupled neutral amino acid symporter 2 (504 aa).

Positions 1-23 (MKKTEMGRFNISPDEDSSSYSSN) are disordered. Topologically, residues 1–76 (MKKTEMGRFN…HPGTTSFGMS (76 aa)) are cytoplasmic. The tract at residues 1-96 (MKKTEMGRFN…SGILGLSYAM (96 aa)) is regulates protein turnover upon amino acid deprivation. Phosphoserine is present on residues S12, S21, S22, and S55. A helical transmembrane segment spans residues 77 to 96 (VFNLSNAIVGSGILGLSYAM). Residue N82 coordinates Na(+). Over 97 to 102 (ANTGIA) the chain is Extracellular. Residues 103–123 (LFIILLTFVSIFSLYSVHLLL) form a helical membrane-spanning segment. Residues 124 to 158 (KTANEGGSLLYEQLGHKAYGLAGKLAASGSITMQN) are Cytoplasmic-facing. A helical transmembrane segment spans residues 159–177 (IGAMSSYLFIVKYELPLVI). At 178-188 (KALMNIEDTNG) the chain is on the extracellular side. A helical membrane pass occupies residues 189–209 (LWYLNGDYLVLLVSLVLILPL). The Cytoplasmic segment spans residues 210–217 (SLLRNLGY). A helical transmembrane segment spans residues 218–238 (LGYTSGLSLLCMIFFLIVVIC). Residues 239 to 289 (KKFQIPCPVEAALVANETVNGTFTQAALALAFNSTADDACRPRYFIFNSQT) are Extracellular-facing. A disulfide bond links C245 and C278. N254 and N258 each carry an N-linked (GlcNAc...) asparagine glycan. The helical transmembrane segment at 290–310 (VYAVPILTFSFVCHPAVLPIY) threads the bilayer. Topologically, residues 311–326 (EELKSRSRRRMMNVSK) are cytoplasmic. A helical membrane pass occupies residues 327-347 (ISFFAMFLMYLLAALFGYLTF). At 348–368 (YGHVESELLHTYSEIVGTDIL) the chain is on the extracellular side. The chain crosses the membrane as a helical span at residues 369–389 (LLVVRLAVLVAVTLTVPVVIF). Position 383 (T383) interacts with Na(+). At 390–410 (PIRSSVTHLLCPTKEFSWLRH) the chain is on the cytoplasmic side. The helical transmembrane segment at 411 to 431 (SIITVTILSFTNLLVIFVPTI) threads the bilayer. The Extracellular portion of the chain corresponds to 432 to 433 (RD). A helical transmembrane segment spans residues 434–454 (IFGFIGASAAAMLIFILPSAF). Over 455–469 (YIKLVKKEPMRSVQK) the chain is Cytoplasmic. A helical transmembrane segment spans residues 470–492 (IGALCFLLSGIVVMIGSMGLIVL). Over 493 to 504 (DWVHDASAAGGH) the chain is Extracellular.

The protein belongs to the amino acid/polyamine transporter 2 family. In terms of processing, polyubiquitination by NEDD4L regulates the degradation and the activity of SLC38A2. In terms of tissue distribution, expressed in cerebral and cerebellar astrocytes and neurons.

The protein localises to the cell membrane. It catalyses the reaction L-alanine(in) + Na(+)(in) = L-alanine(out) + Na(+)(out). It carries out the reaction glycine(in) + Na(+)(in) = glycine(out) + Na(+)(out). The catalysed reaction is L-serine(in) + Na(+)(in) = L-serine(out) + Na(+)(out). The enzyme catalyses L-proline(in) + Na(+)(in) = L-proline(out) + Na(+)(out). It catalyses the reaction L-methionine(in) + Na(+)(in) = L-methionine(out) + Na(+)(out). It carries out the reaction L-histidine(in) + Na(+)(in) = L-histidine(out) + Na(+)(out). The catalysed reaction is L-asparagine(in) + Na(+)(in) = L-asparagine(out) + Na(+)(out). The enzyme catalyses L-glutamine(in) + Na(+)(in) = L-glutamine(out) + Na(+)(out). It catalyses the reaction L-threonine(in) + Na(+)(in) = L-threonine(out) + Na(+)(out). It carries out the reaction L-leucine(in) + Na(+)(in) = L-leucine(out) + Na(+)(out). The catalysed reaction is L-phenylalanine(in) + Na(+)(in) = L-phenylalanine(out) + Na(+)(out). Inhibited by N-methyl-D-glucamine. Inhibited by choline. Allosteric regulation of sodium ions binding by pH. In terms of biological role, symporter that cotransports neutral amino acids and sodium ions from the extracellular to the intracellular side of the cell membrane. The transport is pH-sensitive, Li(+)-intolerant, electrogenic, driven by the Na(+) electrochemical gradient and cotransports of neutral amino acids and sodium ions with a stoichiometry of 1:1. May function in the transport of amino acids at the blood-brain barrier. May function in the transport of amino acids in the supply of maternal nutrients to the fetus through the placenta. Maintains a key metabolic glutamine/glutamate balance underpinning retrograde signaling by dendritic release of the neurotransmitter glutamate. Transports L-proline in differentiating osteoblasts for the efficient synthesis of proline-enriched proteins and provides proline essential for osteoblast differentiation and bone formation during bone development. The polypeptide is Sodium-coupled neutral amino acid symporter 2 (Mus musculus (Mouse)).